The following is a 347-amino-acid chain: Cell shape-determining protein MreB (347 aa).

Residues 19-21 (TAN), 168-170 (GGT), 216-219 (ERIK), and 296-299 (GGAL) each bind ATP.

This sequence belongs to the FtsA/MreB family. As to quaternary structure, forms polymers.

Its subcellular location is the cytoplasm. Its function is as follows. Forms membrane-associated dynamic filaments that are essential for cell shape determination. Acts by regulating cell wall synthesis and cell elongation, and thus cell shape. A feedback loop between cell geometry and MreB localization may maintain elongated cell shape by targeting cell wall growth to regions of negative cell wall curvature. This chain is Cell shape-determining protein MreB, found in Escherichia coli O6:H1 (strain CFT073 / ATCC 700928 / UPEC).